A 506-amino-acid polypeptide reads, in one-letter code: ATP synthase subunit alpha (506 aa).

An ATP-binding site is contributed by 170-177 (GDRQTGKT).

This sequence belongs to the ATPase alpha/beta chains family. F-type ATPases have 2 components, CF(1) - the catalytic core - and CF(0) - the membrane proton channel. CF(1) has five subunits: alpha(3), beta(3), gamma(1), delta(1), epsilon(1). CF(0) has four main subunits: a(1), b(1), b'(1) and c(9-12).

Its subcellular location is the cellular thylakoid membrane. The enzyme catalyses ATP + H2O + 4 H(+)(in) = ADP + phosphate + 5 H(+)(out). Produces ATP from ADP in the presence of a proton gradient across the membrane. The alpha chain is a regulatory subunit. The chain is ATP synthase subunit alpha from Synechococcus sp. (strain JA-2-3B'a(2-13)) (Cyanobacteria bacterium Yellowstone B-Prime).